The primary structure comprises 399 residues: Probable 2-isopropylmalate synthase (399 aa).

Residues 20-272 enclose the Pyruvate carboxyltransferase domain; it reads VRIFDTTLRD…RTGVNTKLLY (253 aa). Residues Asp-29, His-210, His-212, and Asn-246 each coordinate a divalent metal cation.

Belongs to the alpha-IPM synthase/homocitrate synthase family. Homodimer. Requires a divalent metal cation as cofactor.

It carries out the reaction 3-methyl-2-oxobutanoate + acetyl-CoA + H2O = (2S)-2-isopropylmalate + CoA + H(+). Its pathway is amino-acid biosynthesis; L-leucine biosynthesis; L-leucine from 3-methyl-2-oxobutanoate: step 1/4. Functionally, catalyzes the condensation of the acetyl group of acetyl-CoA with 3-methyl-2-oxobutanoate (2-oxoisovalerate) to form 3-carboxy-3-hydroxy-4-methylpentanoate (2-isopropylmalate). The chain is Probable 2-isopropylmalate synthase (leuA) from Ignicoccus hospitalis (strain KIN4/I / DSM 18386 / JCM 14125).